The chain runs to 400 residues: Inosine-5'-monophosphate dehydrogenase (400 aa).

Over residues 96–116 the composition is skewed to basic and acidic residues; sequence KNESTPDQNLDKESTDGKDTK. The tract at residues 96–125 is disordered; that stretch reads KNESTPDQNLDKESTDGKDTKSNNNIDAYS. NAD(+) contacts are provided by residues Asp163 and 212–214; that span reads GIG. The K(+) site is built by Gly214 and Gly216. Ser217 contributes to the IMP binding site. Residue Cys219 coordinates K(+). The active-site Thioimidate intermediate is Cys219. IMP-binding positions include 252–254, 275–276, and 299–303; these read DGG, GS, and YRGMG. The Proton acceptor role is filled by Arg315. Glu329 contributes to the IMP binding site. 3 residues coordinate K(+): Glu383, Ser384, and His385.

The protein belongs to the IMPDH/GMPR family. Homotetramer. The cofactor is K(+).

It localises to the cytoplasm. It carries out the reaction IMP + NAD(+) + H2O = XMP + NADH + H(+). The protein operates within purine metabolism; XMP biosynthesis via de novo pathway; XMP from IMP: step 1/1. With respect to regulation, mycophenolic acid (MPA) is a non-competitive inhibitor that prevents formation of the closed enzyme conformation by binding to the same site as the amobile flap. In contrast, mizoribine monophosphate (MZP) is a competitive inhibitor that induces the closed conformation. MPA is a potent inhibitor of mammalian IMPDHs but a poor inhibitor of the bacterial enzymes. MZP is a more potent inhibitor of bacterial IMPDH. Resistant to mycophenolic acid (MPA) inhibition. Functionally, catalyzes the conversion of inosine 5'-phosphate (IMP) to xanthosine 5'-phosphate (XMP), the first committed and rate-limiting step in the de novo synthesis of guanine nucleotides, and therefore plays an important role in the regulation of cell growth. This is Inosine-5'-monophosphate dehydrogenase from Cryptosporidium parvum.